Consider the following 436-residue polypeptide: Glutamyl-tRNA reductase (436 aa).

Residues 49 to 52 (TCNR), Ser-109, 114 to 116 (EGQ), and Gln-120 contribute to the substrate site. The Nucleophile role is filled by Cys-50. Residue 198-203 (GAGRMS) participates in NADP(+) binding.

The protein belongs to the glutamyl-tRNA reductase family. In terms of assembly, homodimer.

It catalyses the reaction (S)-4-amino-5-oxopentanoate + tRNA(Glu) + NADP(+) = L-glutamyl-tRNA(Glu) + NADPH + H(+). The protein operates within porphyrin-containing compound metabolism; protoporphyrin-IX biosynthesis; 5-aminolevulinate from L-glutamyl-tRNA(Glu): step 1/2. Its pathway is porphyrin-containing compound metabolism; chlorophyll biosynthesis. In terms of biological role, catalyzes the NADPH-dependent reduction of glutamyl-tRNA(Glu) to glutamate 1-semialdehyde (GSA). In Prochlorococcus marinus (strain MIT 9312), this protein is Glutamyl-tRNA reductase.